The primary structure comprises 275 residues: Membrane protein insertase YidC (275 aa).

Residues 1 to 22 (MKKYKRLLLMAGLVTLVFVLSA) form the signal peptide. Cys23 carries N-palmitoyl cysteine lipidation. Cys23 carries the S-diacylglycerol cysteine lipid modification. The next 4 membrane-spanning stretches (helical) occupy residues 53-73 (LGGS…IILL), 127-147 (YIGC…YQAI), 169-189 (YLIL…LSSM), and 206-226 (PAMI…YWVV). A compositionally biased stretch (basic and acidic residues) spans 249-266 (EEAARQAKARERALERAK). The disordered stretch occupies residues 249–275 (EEAARQAKARERALERAKSPKKKGKKK).

The protein belongs to the OXA1/ALB3/YidC family. Type 2 subfamily.

The protein resides in the cell membrane. In terms of biological role, required for the insertion and/or proper folding and/or complex formation of integral membrane proteins into the membrane. Involved in integration of membrane proteins that insert both dependently and independently of the Sec translocase complex, as well as at least some lipoproteins. In Enterococcus faecalis (strain ATCC 700802 / V583), this protein is Membrane protein insertase YidC.